We begin with the raw amino-acid sequence, 61 residues long: Photosystem II reaction center protein K (61 aa).

The propeptide occupies 1 to 24; the sequence is MLNIFSLISICLNSALYSSSFFFG. A helical transmembrane segment spans residues 40 to 60; the sequence is MPVIPVFFFLLAFVWQAAVSF.

Belongs to the PsbK family. In terms of assembly, PSII is composed of 1 copy each of membrane proteins PsbA, PsbB, PsbC, PsbD, PsbE, PsbF, PsbH, PsbI, PsbJ, PsbK, PsbL, PsbM, PsbT, PsbX, PsbY, PsbZ, Psb30/Ycf12, at least 3 peripheral proteins of the oxygen-evolving complex and a large number of cofactors. It forms dimeric complexes.

It localises to the plastid. It is found in the chloroplast thylakoid membrane. In terms of biological role, one of the components of the core complex of photosystem II (PSII). PSII is a light-driven water:plastoquinone oxidoreductase that uses light energy to abstract electrons from H(2)O, generating O(2) and a proton gradient subsequently used for ATP formation. It consists of a core antenna complex that captures photons, and an electron transfer chain that converts photonic excitation into a charge separation. This is Photosystem II reaction center protein K from Jasminum nudiflorum (Winter jasmine).